We begin with the raw amino-acid sequence, 245 residues long: NAD(P)H-quinone oxidoreductase subunit K (245 aa).

4 residues coordinate [4Fe-4S] cluster: Cys-58, Cys-59, Cys-123, and Cys-154. The interval 210 to 245 (SDTRSAPPKELAEAIGMPIPPALLTEKAQKEEQTRG) is disordered. The span at 236–245 (KAQKEEQTRG) shows a compositional bias: basic and acidic residues.

The protein belongs to the complex I 20 kDa subunit family. As to quaternary structure, NDH-1 can be composed of about 15 different subunits; different subcomplexes with different compositions have been identified which probably have different functions. Requires [4Fe-4S] cluster as cofactor.

The protein localises to the cellular thylakoid membrane. It carries out the reaction a plastoquinone + NADH + (n+1) H(+)(in) = a plastoquinol + NAD(+) + n H(+)(out). The enzyme catalyses a plastoquinone + NADPH + (n+1) H(+)(in) = a plastoquinol + NADP(+) + n H(+)(out). Functionally, NDH-1 shuttles electrons from an unknown electron donor, via FMN and iron-sulfur (Fe-S) centers, to quinones in the respiratory and/or the photosynthetic chain. The immediate electron acceptor for the enzyme in this species is believed to be plastoquinone. Couples the redox reaction to proton translocation, and thus conserves the redox energy in a proton gradient. Cyanobacterial NDH-1 also plays a role in inorganic carbon-concentration. The polypeptide is NAD(P)H-quinone oxidoreductase subunit K (Nostoc punctiforme (strain ATCC 29133 / PCC 73102)).